The primary structure comprises 1181 residues: MSNSEKQTLAIEWFKNMSEIKKSRENGLVSKVIAKDVHVLSGAKKYGILWKGKEGEMIDHIAKGQNEHLYEMIDFNSPARLFFDMDFKSKDEFGFGCDIPPNQVVVMFMEELQLFVNKLIGHDSGKFNAKEVLITQCKRLDRPDKHSFHLVYPKIVFRNITQMRAFVLSFGHYLFEEKHMMSLAFQKKGKNRSLGRAVFDMSPYTRDRLFRLMGQSKMGEPYENTLRPVKIQEVYETSNNFFDNLIDDNGISSHAQIITLRYSELENISDYMVQPCSFLDMDATPPSTTLGDLIHNSVLKNYGNVPLKTYVAAKQDRRGVTITLLGNNNKTPGNLKSAKDNILPVDWHTLIKEEFRGKEINIENDEQFLEFFTARELKEADYVYYYLNFISDICHFIPDKTMLTWMNGCDDYVSTRSERKLFYAKESSSKKPITGRFALSLLENVYGVDNVNDLRNPVPKPIGDFKNVKRTVMTTEEWEPIEARDLRSRILTEQNKDLKTNNYINGAITMDFEKEEEYAKIGVPEDEEGNRIEMAQRFNSKKRAYFISGQMGASKSSGTLESIVELVMKGMMKNVLIITPRIVLAKQTILKLFTVYKELLGDSKVKRDFKKTNDIDITAMFHKAYQDKEIRQVKEWCRGRINPEMEHCNICVSLINSIHRLNRAVYDTIIFDEPITCIDNFYIELHTKNSNENAAEVVANTISRRNAIVNRLTGFTMLSNQLFFIDAAFTPDSINLCKSLYYGEYSFIVSPREWNKHMRSEGVGDTTVKNTCKRINKENLEIRKRIRIVKTRSEDKSQMIQKEEVTYKIFREPQMICVYDKSLEKPIFQKIIDYKSKNKLLNTLLETICEGQKVVVYCSTQKESERLYHAVKGWTERKMSWIPRLILITGSTVKKEPGEVVNKIKDGDVIFTTSVLGVGTSISEEGLFDCAFMICKLSVGSPLLSDMIQLSARVRATKNRVLHMNISCGQFGVDCSKLTRELHSFQPANYMYGGFMDCLDITHRNRRLFHHVCISNYTIARETMLSEITDALGHVKDATLSRISPEYIYVKDVDHRFLATRDITEQRQLAQKLDVLDCRMEHTEEFVDFVGLYKNKKEGRRVVAKINVPKKNELLHEFWQKSKIGREGYTPVTHKAYSLKRSHSTMVEHDMDDDESTNKKQELEEEDEECIDIDEYNNERF.

Positions 1141–1181 (RSHSTMVEHDMDDDESTNKKQELEEEDEECIDIDEYNNERF) are disordered. A compositionally biased stretch (acidic residues) spans 1163 to 1181 (LEEEDEECIDIDEYNNERF).

It belongs to the eukaryotic-type primase small subunit family.

Synthesizes small RNA primers for the Okazaki fragments on both template strands at replication forks during viral DNA synthesis. The chain is Putative primase from Magallana gigas (Pacific oyster).